The sequence spans 350 residues: tRNA uridine(34) hydroxylase (350 aa).

The Rhodanese domain occupies 146 to 240; sequence DDPDALFIDM…YARKAREQGL (95 aa). Cys200 (cysteine persulfide intermediate) is an active-site residue.

This sequence belongs to the TrhO family.

It catalyses the reaction uridine(34) in tRNA + AH2 + O2 = 5-hydroxyuridine(34) in tRNA + A + H2O. In terms of biological role, catalyzes oxygen-dependent 5-hydroxyuridine (ho5U) modification at position 34 in tRNAs, the first step in 5-carboxymethoxyuridine (cmo5U) biosynthesis. May be part of an alternate pathway, which is able to bypass cmo5U biogenesis in a subset of tRNAs under aerobic conditions. This is tRNA uridine(34) hydroxylase from Escherichia coli O81 (strain ED1a).